Reading from the N-terminus, the 152-residue chain is Small ribosomal subunit protein bS6 (152 aa).

Residues H96 to A152 are disordered.

It belongs to the bacterial ribosomal protein bS6 family.

In terms of biological role, binds together with bS18 to 16S ribosomal RNA. In Rhizobium etli (strain ATCC 51251 / DSM 11541 / JCM 21823 / NBRC 15573 / CFN 42), this protein is Small ribosomal subunit protein bS6.